We begin with the raw amino-acid sequence, 234 residues long: tRNA (guanine-N(1)-)-methyltransferase (234 aa).

Residues Gly-112 and 132-137 (IGDFIL) contribute to the S-adenosyl-L-methionine site.

This sequence belongs to the RNA methyltransferase TrmD family. Homodimer.

The protein localises to the cytoplasm. It catalyses the reaction guanosine(37) in tRNA + S-adenosyl-L-methionine = N(1)-methylguanosine(37) in tRNA + S-adenosyl-L-homocysteine + H(+). Its function is as follows. Specifically methylates guanosine-37 in various tRNAs. The polypeptide is tRNA (guanine-N(1)-)-methyltransferase (Campylobacter jejuni subsp. jejuni serotype O:6 (strain 81116 / NCTC 11828)).